Here is a 424-residue protein sequence, read N- to C-terminus: Cyclin-dependent kinase D-1 (424 aa).

The Protein kinase domain occupies tyrosine 19 to phenylalanine 299. ATP-binding positions include leucine 25 to valine 33 and lysine 48. A Phosphothreonine modification is found at threonine 29. Residue tyrosine 30 is modified to Phosphotyrosine. Aspartate 141 functions as the Proton acceptor in the catalytic mechanism. Phosphoserine is present on serine 168. Threonine 174 carries the post-translational modification Phosphothreonine. 2 disordered regions span residues proline 303–leucine 337 and alanine 359–glutamate 424. Residues alanine 359–aspartate 374 show a composition bias toward basic and acidic residues.

It belongs to the protein kinase superfamily. CMGC Ser/Thr protein kinase family. CDC2/CDKX subfamily.

The protein resides in the nucleus. The catalysed reaction is L-seryl-[protein] + ATP = O-phospho-L-seryl-[protein] + ADP + H(+). It carries out the reaction L-threonyl-[protein] + ATP = O-phospho-L-threonyl-[protein] + ADP + H(+). The enzyme catalyses [DNA-directed RNA polymerase] + ATP = phospho-[DNA-directed RNA polymerase] + ADP + H(+). The chain is Cyclin-dependent kinase D-1 (CDKD-1) from Oryza sativa subsp. indica (Rice).